We begin with the raw amino-acid sequence, 239 residues long: 1-(5-phosphoribosyl)-5-[(5-phosphoribosylamino)methylideneamino] imidazole-4-carboxamide isomerase (239 aa).

Residue aspartate 8 is the Proton acceptor of the active site. The Proton donor role is filled by aspartate 129.

It belongs to the HisA/HisF family.

It localises to the cytoplasm. It carries out the reaction 1-(5-phospho-beta-D-ribosyl)-5-[(5-phospho-beta-D-ribosylamino)methylideneamino]imidazole-4-carboxamide = 5-[(5-phospho-1-deoxy-D-ribulos-1-ylimino)methylamino]-1-(5-phospho-beta-D-ribosyl)imidazole-4-carboxamide. Its pathway is amino-acid biosynthesis; L-histidine biosynthesis; L-histidine from 5-phospho-alpha-D-ribose 1-diphosphate: step 4/9. This Cereibacter sphaeroides (strain ATCC 17029 / ATH 2.4.9) (Rhodobacter sphaeroides) protein is 1-(5-phosphoribosyl)-5-[(5-phosphoribosylamino)methylideneamino] imidazole-4-carboxamide isomerase.